A 198-amino-acid polypeptide reads, in one-letter code: Uracil phosphoribosyltransferase homolog (198 aa).

Belongs to the UPRTase family.

The protein localises to the plastid. The protein resides in the chloroplast. The polypeptide is Uracil phosphoribosyltransferase homolog (Porphyra purpurea (Red seaweed)).